A 466-amino-acid polypeptide reads, in one-letter code: Exodeoxyribonuclease 7 large subunit (466 aa).

Belongs to the XseA family. In terms of assembly, heterooligomer composed of large and small subunits.

The protein localises to the cytoplasm. It catalyses the reaction Exonucleolytic cleavage in either 5'- to 3'- or 3'- to 5'-direction to yield nucleoside 5'-phosphates.. Bidirectionally degrades single-stranded DNA into large acid-insoluble oligonucleotides, which are then degraded further into small acid-soluble oligonucleotides. This chain is Exodeoxyribonuclease 7 large subunit, found in Vesicomyosocius okutanii subsp. Calyptogena okutanii (strain HA).